The sequence spans 443 residues: Protein king tubby (443 aa).

Disordered stretches follow at residues 57 to 80 and 98 to 191; these read TNGS…NNMR and HELE…EGDV. The segment covering 67–80 has biased composition (polar residues); it reads VAMNTSRNHSNNMR. The span at 113–128 shows a compositional bias: low complexity; it reads QQQQSASHSANSTQSQ. A Phosphoserine modification is found at S136. Gly residues predominate over residues 177–186; that stretch reads NGTGNGTGGE.

The protein belongs to the TUB family.

The protein localises to the cytoplasm. It localises to the nucleus. Its subcellular location is the cell projection. It is found in the cilium membrane. The protein resides in the rhabdomere. The protein is Protein king tubby of Drosophila sechellia (Fruit fly).